Reading from the N-terminus, the 247-residue chain is Probable transcriptional regulatory protein DVU_2259 (247 aa).

Positions 1-22 are disordered; the sequence is MAGHSKWANIQHRKGRQDAKRG.

The protein belongs to the TACO1 family.

The protein resides in the cytoplasm. The chain is Probable transcriptional regulatory protein DVU_2259 from Nitratidesulfovibrio vulgaris (strain ATCC 29579 / DSM 644 / CCUG 34227 / NCIMB 8303 / VKM B-1760 / Hildenborough) (Desulfovibrio vulgaris).